Consider the following 496-residue polypeptide: Iroquois-class homeodomain protein irx-4-A (496 aa).

Residues G141–N203 constitute a DNA-binding region (homeobox; TALE-type). The segment at N203–D246 is disordered. The segment covering D221–D232 has biased composition (acidic residues).

It belongs to the TALE/IRO homeobox family. As to expression, expressed in the neural plate in overlapping patterns with other irx members, which all share an anterior border of expression. At stage 20, expressed in a subset of cells in the developing hindbrain with expression appearing above the otic vesicle by stage 26. Expression in retina cells begins at stage 28, continuing at later stages and is limited to a subset of retinal cells of the optic cup. Also expressed in the ventricle of the heart from stage 36 (late tailbud) onwards. Only expressed in the pronephros at tadpole stage.

It is found in the nucleus. Its function is as follows. Acts partially redundantly with other irx members in neural patterning. Required for formation of the posterior forebrain, midbrain, hindbrain, and to a lesser extent, spinal cord. Patterns the neuroectoderm in both the anterior/posterior and dorsal/ventral axes. Does not appear to play a role in pronephros kidney development. The chain is Iroquois-class homeodomain protein irx-4-A (irx4-a) from Xenopus laevis (African clawed frog).